Here is a 282-residue protein sequence, read N- to C-terminus: F-box/SPRY domain-containing protein 1 (282 aa).

The interval 1 to 32 (MAAAAINAAAPPPPVAPTAPPPPPPPPLSQAS) is disordered. Residues 10–28 (APPPPVAPTAPPPPPPPPL) are compositionally biased toward pro residues. An F-box domain is found at 29 to 78 (SQASGRLPSRVLELVFSYLDLPDLRSCGLVCKHWYRCLHGDENSEVWRSL). The B30.2/SPRY domain maps to 88 to 280 (LRTDILCNLP…VTLVYLGKPL (193 aa)).

Belongs to the FBXO45/Fsn family. In terms of assembly, probable component of a E3 ubiquitin ligase complex.

The protein operates within protein modification; protein ubiquitination. The protein is F-box/SPRY domain-containing protein 1 (fbxo45) of Xenopus tropicalis (Western clawed frog).